Here is a 326-residue protein sequence, read N- to C-terminus: MSTPDVVREAQSTEAYNPLAKQKAAAKLSRIPIKVEQGEVLKKPEWIRVKAGSPTTRFYEIKNILREHKLHTVCEEASCPNIGECFGRGTATFMIMGDKCTRRCPFCDVGHGRPDPLDKDEPLNLAKTIAALRLKYVVITSVDRDDLRDGGSGHFVECIQRTRELSPSTQIEILTPDFRGRDDRALEILKAAPPDVMNHNLETVPRLYKEARPGSDYQFSLNLLKKFKQLHPGVPTKSGLMVGLGETDEEILEVMRDMRAHGIEMLTIGQYLAPSNSHLPVRRYVHPDTFKMFEEEAYKMGFSHAAVGAMVRSSYHADQQAHAAGV.

Residues cysteine 74, cysteine 79, cysteine 85, cysteine 100, cysteine 104, cysteine 107, and serine 314 each coordinate [4Fe-4S] cluster. One can recognise a Radical SAM core domain in the interval cysteine 85–serine 303.

It belongs to the radical SAM superfamily. Lipoyl synthase family. It depends on [4Fe-4S] cluster as a cofactor.

It is found in the cytoplasm. The enzyme catalyses [[Fe-S] cluster scaffold protein carrying a second [4Fe-4S](2+) cluster] + N(6)-octanoyl-L-lysyl-[protein] + 2 oxidized [2Fe-2S]-[ferredoxin] + 2 S-adenosyl-L-methionine + 4 H(+) = [[Fe-S] cluster scaffold protein] + N(6)-[(R)-dihydrolipoyl]-L-lysyl-[protein] + 4 Fe(3+) + 2 hydrogen sulfide + 2 5'-deoxyadenosine + 2 L-methionine + 2 reduced [2Fe-2S]-[ferredoxin]. Its pathway is protein modification; protein lipoylation via endogenous pathway; protein N(6)-(lipoyl)lysine from octanoyl-[acyl-carrier-protein]: step 2/2. Catalyzes the radical-mediated insertion of two sulfur atoms into the C-6 and C-8 positions of the octanoyl moiety bound to the lipoyl domains of lipoate-dependent enzymes, thereby converting the octanoylated domains into lipoylated derivatives. The polypeptide is Lipoyl synthase (Acidovorax ebreus (strain TPSY) (Diaphorobacter sp. (strain TPSY))).